Reading from the N-terminus, the 196-residue chain is MKKLTVYLATTNPHKVEEIKMIAPEWMEILPSPEKIEVVEDGETFLENSVKKAVVYGKKLKHPVMADDSGLVIYSLGGFPGVMSARFMEEHSYKEKMRTILKMLEGKDRRAAFVCSATFFDPVENTLISVEDRVEGRIANEIRGTGGFGYDPFFIPDGYDKTFGEIPHLKEKISHRSKAFRKLFSVLEKILESENR.

10-15 contributes to the substrate binding site; the sequence is TTNPHK. The active-site Proton acceptor is the Asp-68. Residue Asp-68 coordinates Mg(2+). Residues Ser-69, 148-151, and 175-176 contribute to the substrate site; these read FGYD and HR.

It belongs to the HAM1 NTPase family. Homodimer. The cofactor is Mg(2+).

The enzyme catalyses XTP + H2O = XMP + diphosphate + H(+). It carries out the reaction dITP + H2O = dIMP + diphosphate + H(+). It catalyses the reaction ITP + H2O = IMP + diphosphate + H(+). Functionally, pyrophosphatase that catalyzes the hydrolysis of nucleoside triphosphates to their monophosphate derivatives, with a high preference for the non-canonical purine nucleotides XTP (xanthosine triphosphate), dITP (deoxyinosine triphosphate) and ITP. Seems to function as a house-cleaning enzyme that removes non-canonical purine nucleotides from the nucleotide pool, thus preventing their incorporation into DNA/RNA and avoiding chromosomal lesions. The protein is dITP/XTP pyrophosphatase of Thermotoga maritima (strain ATCC 43589 / DSM 3109 / JCM 10099 / NBRC 100826 / MSB8).